Here is a 408-residue protein sequence, read N- to C-terminus: Peptidase T (408 aa).

H79 contributes to the Zn(2+) binding site. Residue D81 is part of the active site. D139 is a Zn(2+) binding site. Residue E173 is the Proton acceptor of the active site. Zn(2+) is bound by residues E174, D196, and H378.

Belongs to the peptidase M20B family. It depends on Zn(2+) as a cofactor.

Its subcellular location is the cytoplasm. It carries out the reaction Release of the N-terminal residue from a tripeptide.. In terms of biological role, cleaves the N-terminal amino acid of tripeptides. The chain is Peptidase T from Shouchella clausii (strain KSM-K16) (Alkalihalobacillus clausii).